Reading from the N-terminus, the 275-residue chain is 2,3,4,5-tetrahydropyridine-2,6-dicarboxylate N-succinyltransferase (275 aa).

Substrate contacts are provided by arginine 104 and aspartate 141.

It belongs to the transferase hexapeptide repeat family. Homotrimer.

Its subcellular location is the cytoplasm. The catalysed reaction is (S)-2,3,4,5-tetrahydrodipicolinate + succinyl-CoA + H2O = (S)-2-succinylamino-6-oxoheptanedioate + CoA. Its pathway is amino-acid biosynthesis; L-lysine biosynthesis via DAP pathway; LL-2,6-diaminopimelate from (S)-tetrahydrodipicolinate (succinylase route): step 1/3. The chain is 2,3,4,5-tetrahydropyridine-2,6-dicarboxylate N-succinyltransferase from Haemophilus influenzae (strain PittEE).